Reading from the N-terminus, the 179-residue chain is Shikimate kinase (179 aa).

12 to 17 (GVGKSK) serves as a coordination point for ATP. A Mg(2+)-binding site is contributed by Ser-16. Positions 34, 61, and 83 each coordinate substrate. Arg-131 is an ATP binding site. Position 147 (Arg-147) interacts with substrate.

It belongs to the shikimate kinase family. As to quaternary structure, monomer. The cofactor is Mg(2+).

It is found in the cytoplasm. The enzyme catalyses shikimate + ATP = 3-phosphoshikimate + ADP + H(+). The protein operates within metabolic intermediate biosynthesis; chorismate biosynthesis; chorismate from D-erythrose 4-phosphate and phosphoenolpyruvate: step 5/7. In terms of biological role, catalyzes the specific phosphorylation of the 3-hydroxyl group of shikimic acid using ATP as a cosubstrate. The polypeptide is Shikimate kinase (Leptospira borgpetersenii serovar Hardjo-bovis (strain JB197)).